The following is a 167-amino-acid chain: Large ribosomal subunit protein uL10 (167 aa).

It belongs to the universal ribosomal protein uL10 family. As to quaternary structure, part of the ribosomal stalk of the 50S ribosomal subunit. The N-terminus interacts with L11 and the large rRNA to form the base of the stalk. The C-terminus forms an elongated spine to which L12 dimers bind in a sequential fashion forming a multimeric L10(L12)X complex.

In terms of biological role, forms part of the ribosomal stalk, playing a central role in the interaction of the ribosome with GTP-bound translation factors. The protein is Large ribosomal subunit protein uL10 of Tolumonas auensis (strain DSM 9187 / NBRC 110442 / TA 4).